We begin with the raw amino-acid sequence, 366 residues long: Ferredoxin--NADP reductase (366 aa).

Residues Asp-51, Gln-59, Tyr-64, Val-104, Phe-139, Asp-308, and Thr-349 each coordinate FAD.

The protein belongs to the ferredoxin--NADP reductase type 2 family. In terms of assembly, homodimer. FAD is required as a cofactor.

The enzyme catalyses 2 reduced [2Fe-2S]-[ferredoxin] + NADP(+) + H(+) = 2 oxidized [2Fe-2S]-[ferredoxin] + NADPH. This chain is Ferredoxin--NADP reductase, found in Polaromonas sp. (strain JS666 / ATCC BAA-500).